Consider the following 209-residue polypeptide: Immunoglobulin lambda-like polypeptide 1 (209 aa).

The first 30 residues, 1-30, serve as a signal peptide directing secretion; that stretch reads MKLRVGQTLGTIPRQCEVLLLLLLLGLVDG. A j region region spans residues 93-104; the sequence is VFGGGTQLTILG. Positions 105–209 are c region; it reads QPKSDPLVTL…EKSVSPAECS (105 aa). In terms of domain architecture, Ig-like C1-type spans 110 to 204; the sequence is PLVTLFLPSL…EGNTVEKSVS (95 aa). Cys131 and Cys190 are joined by a disulfide.

As to quaternary structure, interacts with VPREB1A. Interacts with SYNV1/HRD1 (via N-terminus); this interaction leads to increased IGLL1 ubiquitination and degradation in pre-B cells, possibly through a lysosomal, not proteasomal, pathway. Selectively expressed in pre-B lymphocytes.

It is found in the endoplasmic reticulum. It localises to the secreted. Functionally, critical for B-cell development. The polypeptide is Immunoglobulin lambda-like polypeptide 1 (Igll1) (Mus musculus (Mouse)).